Reading from the N-terminus, the 261-residue chain is Small ribosomal subunit protein eS4z (261 aa).

An S4 RNA-binding domain is found at 42–104; the sequence is LPLVLIIRNR…TNENFRLLYD (63 aa).

It belongs to the eukaryotic ribosomal protein eS4 family.

The protein localises to the cytoplasm. This Arabidopsis thaliana (Mouse-ear cress) protein is Small ribosomal subunit protein eS4z (RPS4A).